We begin with the raw amino-acid sequence, 122 residues long: Large ribosomal subunit protein bL12 (122 aa).

The protein belongs to the bacterial ribosomal protein bL12 family. As to quaternary structure, homodimer. Part of the ribosomal stalk of the 50S ribosomal subunit. Forms a multimeric L10(L12)X complex, where L10 forms an elongated spine to which 2 to 4 L12 dimers bind in a sequential fashion. Binds GTP-bound translation factors.

Forms part of the ribosomal stalk which helps the ribosome interact with GTP-bound translation factors. Is thus essential for accurate translation. The sequence is that of Large ribosomal subunit protein bL12 from Sodalis glossinidius (strain morsitans).